A 138-amino-acid chain; its full sequence is Basic phospholipase A2 PL-Y (138 aa).

A signal peptide spans 1–16 (MRTLWIMAVLLVGVEG). 7 disulfide bridges follow: C42-C131, C44-C60, C59-C111, C65-C138, C66-C104, C73-C97, and C91-C102. Ca(2+)-binding residues include Y43, G45, and G47. The active site involves H63. Position 64 (D64) interacts with Ca(2+). The active site involves D105.

The protein belongs to the phospholipase A2 family. Group II subfamily. D49 sub-subfamily. The cofactor is Ca(2+). In terms of tissue distribution, expressed by the venom gland.

It is found in the secreted. It catalyses the reaction a 1,2-diacyl-sn-glycero-3-phosphocholine + H2O = a 1-acyl-sn-glycero-3-phosphocholine + a fatty acid + H(+). Snake venom phospholipase A2 (PLA2) that can cleave arachidonate at the sn-2 position from phospholipides in the micellar state or in bilayer membranes. PLA2 catalyzes the calcium-dependent hydrolysis of the 2-acyl groups in 3-sn-phosphoglycerides. The protein is Basic phospholipase A2 PL-Y of Protobothrops flavoviridis (Habu).